The following is a 98-amino-acid chain: Lipolysis-activating peptide 1-beta chain (98 aa).

Positions 1–22 (MANVQVIFVAYIAVIAFSMVYG) are cleaved as a signal peptide. One can recognise an LCN-type CS-alpha/beta domain in the interval 23-91 (DDYKPFGEHN…FLKAMEKQCP (69 aa)). Cystine bridges form between Cys-37/Cys-60, Cys-45/Cys-70, and Cys-49/Cys-72.

Belongs to the long (3 C-C) scorpion toxin superfamily. Homodimer; disulfide-linked or monomer (edited version) or heterodimer of an alpha chain (AC B8XH01) and this beta chain (non-edited version). As to expression, expressed by the venom gland.

It is found in the secreted. Functionally, the homodimer inhibits HMG-CoA reductase (HMGCR) (32% of inhibition produced by 0.6 uM), a glycoprotein involved in the control of cholesterol biosynthesis. The inhibitory effects of bumarsin are seen at much lower concentrations (0.6 uM) than that for statins such as atorvastatin (5 mM) and simvastatin (10 uM). In addition to inhibition of HMG-CoA reductase, this protein lowers cholesterol levels by inducing steroid hormone synthesis via StAR, and by increasing reverse cholesterol transport mediated by the induction of ABCA1 and APOA1. In terms of biological role, the heterodimer non-edited LVP1 induces lipolysis in rat adipocytes. Induction of lipolysis by LVP1 appears to be mediated through the beta-2 adrenergic receptor pathway (ADRB2). The monomer edited version, similar to alpha-toxins, may modulate voltage-gated sodium channels (Nav) and may block voltage-gated potassium channels (Kv). The protein is Lipolysis-activating peptide 1-beta chain of Buthus israelis (Israeli scorpion).